A 250-amino-acid polypeptide reads, in one-letter code: Acidic leucine-rich nuclear phosphoprotein 32 family member E (250 aa).

At Ser8 the chain carries Phosphoserine. LRR repeat units lie at residues 43 to 64 (ELEF…PSLP), 65 to 87 (KLRK…AEKC), and 89 to 110 (NLTY…EALQ). In terms of domain architecture, LRRCT spans 123–161 (CEITTLEDYRESIFELLPQVTYLDGFDAEDNEAPDSEAD). 3 stretches are compositionally biased toward acidic residues: residues 149-171 (DAED…DGDE), 178-191 (EYEE…EGSE), and 205-227 (IQDE…EEEA). A disordered region spans residues 149-250 (DAEDNEAPDS…EGEDDDEDDD (102 aa)). Residues 194 to 247 (EVGLSYLMKEDIQDEEDDDDYVEEEEEEGGEEEADVRGEKRKREAEDEGEDDDE) form a ZID domain region. Positions 228 to 238 (DVRGEKRKREA) are enriched in basic and acidic residues. Residues 239 to 250 (EDEGEDDDEDDD) are compositionally biased toward acidic residues.

It belongs to the ANP32 family. Component of a SWR1-like complex. Interacts with H2A.Z/H2AZ1. Post-translationally, phosphorylated. The phosphorylation is nuclear localization signal (NLS)-dependent.

It localises to the cytoplasm. The protein localises to the nucleus. Functionally, histone chaperone that specifically mediates the genome-wide removal of histone H2A.Z/H2AZ1 from the nucleosome: removes H2A.Z/H2AZ1 from its normal sites of deposition, especially from enhancer and insulator regions. Not involved in deposition of H2A.Z/H2AZ1 in the nucleosome. May stabilize the evicted H2A.Z/H2AZ1-H2B dimer, thus shifting the equilibrium towards dissociation and the off-chromatin state. Inhibits activity of protein phosphatase 2A (PP2A). Does not inhibit protein phosphatase 1. May play a role in cerebellar development and synaptogenesis. The protein is Acidic leucine-rich nuclear phosphoprotein 32 family member E (anp32e) of Danio rerio (Zebrafish).